A 225-amino-acid chain; its full sequence is Phosphatidylserine decarboxylase proenzyme (225 aa).

Catalysis depends on Ser-195, which acts as the Schiff-base intermediate with substrate; via pyruvic acid. Ser-195 is subject to Pyruvic acid (Ser); by autocatalysis.

Belongs to the phosphatidylserine decarboxylase family. PSD-A subfamily. Heterodimer of a large membrane-associated beta subunit and a small pyruvoyl-containing alpha subunit. It depends on pyruvate as a cofactor. In terms of processing, is synthesized initially as an inactive proenzyme. Formation of the active enzyme involves a self-maturation process in which the active site pyruvoyl group is generated from an internal serine residue via an autocatalytic post-translational modification. Two non-identical subunits are generated from the proenzyme in this reaction, and the pyruvate is formed at the N-terminus of the alpha chain, which is derived from the carboxyl end of the proenzyme. The post-translation cleavage follows an unusual pathway, termed non-hydrolytic serinolysis, in which the side chain hydroxyl group of the serine supplies its oxygen atom to form the C-terminus of the beta chain, while the remainder of the serine residue undergoes an oxidative deamination to produce ammonia and the pyruvoyl prosthetic group on the alpha chain.

The protein resides in the cell membrane. It carries out the reaction a 1,2-diacyl-sn-glycero-3-phospho-L-serine + H(+) = a 1,2-diacyl-sn-glycero-3-phosphoethanolamine + CO2. It participates in phospholipid metabolism; phosphatidylethanolamine biosynthesis; phosphatidylethanolamine from CDP-diacylglycerol: step 2/2. Catalyzes the formation of phosphatidylethanolamine (PtdEtn) from phosphatidylserine (PtdSer). In Gluconacetobacter diazotrophicus (strain ATCC 49037 / DSM 5601 / CCUG 37298 / CIP 103539 / LMG 7603 / PAl5), this protein is Phosphatidylserine decarboxylase proenzyme.